The chain runs to 172 residues: Co-chaperone protein HscB (172 aa).

The J domain occupies 2 to 74 (DYFTLFGLPI…LKRAEYMLSL (73 aa)).

The protein belongs to the HscB family. In terms of assembly, interacts with HscA and stimulates its ATPase activity. Interacts with IscU.

Its function is as follows. Co-chaperone involved in the maturation of iron-sulfur cluster-containing proteins. Seems to help targeting proteins to be folded toward HscA. This is Co-chaperone protein HscB from Pectobacterium atrosepticum (strain SCRI 1043 / ATCC BAA-672) (Erwinia carotovora subsp. atroseptica).